Reading from the N-terminus, the 262-residue chain is Type III pantothenate kinase (262 aa).

12–19 serves as a coordination point for ATP; it reads DIGNTSIA. Residues Y94 and 109–112 contribute to the substrate site; that span reads GSDV. D111 acts as the Proton acceptor in catalysis. Position 132 (D132) interacts with K(+). Residue T135 coordinates ATP. T187 lines the substrate pocket.

It belongs to the type III pantothenate kinase family. In terms of assembly, homodimer. It depends on NH4(+) as a cofactor. K(+) is required as a cofactor.

The protein localises to the cytoplasm. The catalysed reaction is (R)-pantothenate + ATP = (R)-4'-phosphopantothenate + ADP + H(+). The protein operates within cofactor biosynthesis; coenzyme A biosynthesis; CoA from (R)-pantothenate: step 1/5. Functionally, catalyzes the phosphorylation of pantothenate (Pan), the first step in CoA biosynthesis. The chain is Type III pantothenate kinase from Borreliella burgdorferi (strain ATCC 35210 / DSM 4680 / CIP 102532 / B31) (Borrelia burgdorferi).